Consider the following 371-residue polypeptide: Ligninase LG5 (371 aa).

The signal sequence occupies residues Met1–Gly21. Positions Ala22–Arg27 are excised as a propeptide. Cystine bridges form between Cys30–Cys42, Cys41–Cys311, Cys61–Cys146, and Cys275–Cys344. The Proton acceptor role is filled by His74. Ca(2+) contacts are provided by Asp75, Gly92, Asp94, and Ser96. His202 is a heme b binding site. Residues Ser203, Asp220, Thr222, Ile225, and Asp227 each coordinate Ca(2+). Asn283 is a glycosylation site (N-linked (GlcNAc...) asparagine). The disordered stretch occupies residues Phe349–Ala371.

It belongs to the peroxidase family. Ligninase subfamily. Ca(2+) is required as a cofactor. It depends on heme b as a cofactor.

It carries out the reaction 1-(3,4-dimethoxyphenyl)-2-(2-methoxyphenoxy)propane-1,3-diol + H2O2 = 3,4-dimethoxybenzaldehyde + guaiacol + glycolaldehyde + H2O. The enzyme catalyses 2 (3,4-dimethoxyphenyl)methanol + H2O2 = 2 (3,4-dimethoxyphenyl)methanol radical + 2 H2O. It functions in the pathway secondary metabolite metabolism; lignin degradation. In terms of biological role, depolymerization of lignin. Catalyzes the C(alpha)-C(beta) cleavage of the propyl side chains of lignin. This chain is Ligninase LG5 (GLG5), found in Phanerodontia chrysosporium (White-rot fungus).